A 418-amino-acid polypeptide reads, in one-letter code: Bifunctional enzyme IspD/IspF (418 aa).

The tract at residues 1–261 is 2-C-methyl-D-erythritol 4-phosphate cytidylyltransferase; that stretch reads MADTPALIPQ…EFKRASDMNF (261 aa). The tract at residues 262 to 418 is 2-C-methyl-D-erythritol 2,4-cyclodiphosphate synthase; it reads RIGEGWDIHA…RATVLLRKFI (157 aa). Aspartate 268 and histidine 270 together coordinate a divalent metal cation. Residues 268 to 270 and 294 to 295 contribute to the 4-CDP-2-C-methyl-D-erythritol 2-phosphate site; these read DIH and HS. Histidine 302 is an a divalent metal cation binding site. 4-CDP-2-C-methyl-D-erythritol 2-phosphate is bound by residues 316-318 and 321-325; these read DIG and FPDTD.

It in the N-terminal section; belongs to the IspD/TarI cytidylyltransferase family. IspD subfamily. This sequence in the C-terminal section; belongs to the IspF family. The cofactor is a divalent metal cation.

It catalyses the reaction 2-C-methyl-D-erythritol 4-phosphate + CTP + H(+) = 4-CDP-2-C-methyl-D-erythritol + diphosphate. It carries out the reaction 4-CDP-2-C-methyl-D-erythritol 2-phosphate = 2-C-methyl-D-erythritol 2,4-cyclic diphosphate + CMP. It functions in the pathway isoprenoid biosynthesis; isopentenyl diphosphate biosynthesis via DXP pathway; isopentenyl diphosphate from 1-deoxy-D-xylulose 5-phosphate: step 2/6. The protein operates within isoprenoid biosynthesis; isopentenyl diphosphate biosynthesis via DXP pathway; isopentenyl diphosphate from 1-deoxy-D-xylulose 5-phosphate: step 4/6. Bifunctional enzyme that catalyzes the formation of 4-diphosphocytidyl-2-C-methyl-D-erythritol from CTP and 2-C-methyl-D-erythritol 4-phosphate (MEP) (IspD), and catalyzes the conversion of 4-diphosphocytidyl-2-C-methyl-D-erythritol 2-phosphate (CDP-ME2P) to 2-C-methyl-D-erythritol 2,4-cyclodiphosphate (ME-CPP) with a corresponding release of cytidine 5-monophosphate (CMP) (IspF). The chain is Bifunctional enzyme IspD/IspF from Albidiferax ferrireducens (strain ATCC BAA-621 / DSM 15236 / T118) (Rhodoferax ferrireducens).